The primary structure comprises 545 residues: E3 ubiquitin-protein ligase ipaH9.8 (545 aa).

The interaction with target proteins stretch occupies residues 1-242 (MLPINNNFSL…YHGPRIYFSM (242 aa)). 8 LRR repeats span residues 57-77 (NSDELRLDRLNLSSLPDNLPA), 78-99 (QITLLNVSYNQLTNLPELPVTL), 100-117 (KKLYSASNKLSELPVLPP), 118-139 (ALESLQVQHNELENLPALPDSL), 140-157 (LTMNISYNEIVSLPSLPQ), 158-179 (ALKNLRATRNFLTELPAFSEGN), 182-203 (VVREYFFDRNQISHIPESILNL), and 205-228 (NECSIHISDNPLSSHALQALQRLT). Positions 243-250 (SDGQQNTL) are linker. Residues 251–545 (HRPLADAVTA…SENGSQLHHS (295 aa)) are E3 ubiquitin-protein ligase catalytic domain. Positions 253–545 (PLADAVTAWF…SENGSQLHHS (293 aa)) constitute an NEL domain. Cys337 serves as the catalytic Glycyl thioester intermediate.

Belongs to the LRR-containing bacterial E3 ligase family. In terms of assembly, also interacts with human and mouse U2AF1 (U2AF35). In terms of processing, ubiquitinated in the presence of host E1 ubiquitin-activating enzyme, E2 ubiquitin-conjugating enzyme and ubiquitin.

It is found in the secreted. It localises to the host cytoplasm. The protein resides in the host nucleus. The enzyme catalyses S-ubiquitinyl-[E2 ubiquitin-conjugating enzyme]-L-cysteine + [acceptor protein]-L-lysine = [E2 ubiquitin-conjugating enzyme]-L-cysteine + N(6)-ubiquitinyl-[acceptor protein]-L-lysine.. Its activity is regulated as follows. Exists in an autoinhibited state in the absence of substrate protein, due to interactions of the leucine-rich repeats with NEL domain. Is activated upon binding to a substrate protein. Its function is as follows. Effector E3 ubiquitin ligase that interferes with host's ubiquitination pathway and modulates the acute inflammatory responses, thus facilitating bacterial colonization within the host cell. Interacts with IKBKG (NEMO) and TNIP1 (ABIN-1), a ubiquitin-binding adapter protein, which results in TNIP1-dependent 'Lys-27'-linked polyubiquitination of IKBKG. Consequently, polyubiquitinated IKBKG undergoes proteasome-dependent degradation, which perturbs NF-kappa-B activation during bacterial infection. Mediates polyubiquitination of host U2AF1, leading to its proteasomal degradation. Catalyzes 'Lys-48'-linked polyubiquitination and subsequent degradation of a subset of host guanylate-binding proteins (GBP1, GBP2, GBP4 and GBP6), thereby suppressing host cell defense. In contrast, host GBP3 and GBP7 are not ubiquitinated by IpaH9.8. Uses UBE2D2 (UBCH5B) as an E2 ubiquitin-conjugating enzyme. This chain is E3 ubiquitin-protein ligase ipaH9.8 (ipaH9.8), found in Shigella boydii serotype 18 (strain CDC 3083-94 / BS512).